A 220-amino-acid polypeptide reads, in one-letter code: Cell division protein SepF (220 aa).

The segment at 1–120 (MAIKDAFNKM…RREQYQHAAH (120 aa)) is disordered. Positions 26-35 (LSSKKQEEPV) are enriched in basic and acidic residues. Low complexity predominate over residues 39–79 (QQTSRPNQQQQAARASQPQQPKQARPQMQAQQRPQSQSRAA). Basic and acidic residues predominate over residues 93-102 (VSHDYNDRRA).

Belongs to the SepF family. In terms of assembly, homodimer. Interacts with FtsZ.

It is found in the cytoplasm. Its function is as follows. Cell division protein that is part of the divisome complex and is recruited early to the Z-ring. Probably stimulates Z-ring formation, perhaps through the cross-linking of FtsZ protofilaments. Its function overlaps with FtsA. The sequence is that of Cell division protein SepF from Streptococcus equi subsp. equi (strain 4047).